The primary structure comprises 127 residues: MDLIAQLEAEQIAALGKDIPDFKAGDTIRVGYKVTEGTRSRVQNYEGVCISRKNGSGIAGSFTVRKISFGEGVERVFPLYSTNIDSITVVRRGRVRRAKLYYLRARRGKSARIAEVANYKPKADAEA.

It belongs to the bacterial ribosomal protein bL19 family.

This protein is located at the 30S-50S ribosomal subunit interface and may play a role in the structure and function of the aminoacyl-tRNA binding site. The polypeptide is Large ribosomal subunit protein bL19 (Ruegeria pomeroyi (strain ATCC 700808 / DSM 15171 / DSS-3) (Silicibacter pomeroyi)).